Here is a 136-residue protein sequence, read N- to C-terminus: MLQPKRTKFRKVHKGRNRGIAGGTEVSFGTFGLKAVGRGRLTARQIEAARRAMTRAVKRQGKIWIRVFPDKPITEKPLEVRMGKGKGNVEYWVALIQPGKVLYEMDGVSEEIAREAFALAAAKLPVKTTFVTKTVM.

This sequence belongs to the universal ribosomal protein uL16 family. In terms of assembly, part of the 50S ribosomal subunit.

Binds 23S rRNA and is also seen to make contacts with the A and possibly P site tRNAs. This chain is Large ribosomal subunit protein uL16, found in Aggregatibacter actinomycetemcomitans (Actinobacillus actinomycetemcomitans).